The primary structure comprises 322 residues: Transaldolase (322 aa).

Lys-136 acts as the Schiff-base intermediate with substrate in catalysis.

This sequence belongs to the transaldolase family. Type 1 subfamily. In terms of assembly, homodimer.

It localises to the cytoplasm. It catalyses the reaction D-sedoheptulose 7-phosphate + D-glyceraldehyde 3-phosphate = D-erythrose 4-phosphate + beta-D-fructose 6-phosphate. It functions in the pathway carbohydrate degradation; pentose phosphate pathway; D-glyceraldehyde 3-phosphate and beta-D-fructose 6-phosphate from D-ribose 5-phosphate and D-xylulose 5-phosphate (non-oxidative stage): step 2/3. Transaldolase is important for the balance of metabolites in the pentose-phosphate pathway. This Xanthomonas oryzae pv. oryzae (strain PXO99A) protein is Transaldolase.